The chain runs to 420 residues: Vasopressin V1a receptor (420 aa).

The interval 1 to 20 is disordered; it reads MSFPRGSYDPAASNSSPWWP. Residues 1–54 lie on the Extracellular side of the membrane; it reads MSFPRGSYDPAASNSSPWWPLSAEDANSSWEAAGHQKGSDPSGDVRNEELAKLE. An N-linked (GlcNAc...) asparagine glycan is attached at asparagine 27. Residues 55-75 form a helical membrane-spanning segment; it reads IAVLAVIFVVAVLGNSSVLLA. Topologically, residues 76 to 92 are cytoplasmic; it reads LHRTPRKTSRMHLFIRH. Residues 93–113 traverse the membrane as a helical segment; it reads LSLADLAVAFFQVLPQLCWDI. Topologically, residues 114 to 125 are extracellular; that stretch reads TYRFRGPDWLCR. A disulfide bridge connects residues cysteine 124 and cysteine 205. The helical transmembrane segment at 126–146 threads the bilayer; it reads VVKHLQVFAMFASAYMLVVMT. Over 147–168 the chain is Cytoplasmic; sequence ADRYIAVCHPLKTLQQPTRRSR. A helical transmembrane segment spans residues 169-189; that stretch reads LMIAASWVLSFLLSTPQYFIF. The Extracellular portion of the chain corresponds to 190-225; the sequence is SMIEIEVNNGTKTQDCWATFIQPWGTRAYVTWMTSG. Asparagine 198 is a glycosylation site (N-linked (GlcNAc...) asparagine). A helical transmembrane segment spans residues 226–246; sequence VFVVPVVILGTCYGFICYHIW. Residues 247 to 294 are Cytoplasmic-facing; it reads RNVRGKTASRQSKGSGEDVAPFHKGLLVTPCVSSVKTISRAKIRTVKM. The helical transmembrane segment at 295 to 315 threads the bilayer; the sequence is TFVIVTAYILCWAPFFIVQMW. Residues 316 to 331 are Extracellular-facing; that stretch reads SVWDDNFIWTDSENPS. Residues 332-352 form a helical membrane-spanning segment; sequence ITITALLASLNSCCNPWIYMF. At 353 to 420 the chain is on the cytoplasmic side; sequence FSGHLLQDCV…RSIRFIPVST (68 aa). Residues cysteine 367 and cysteine 368 are each lipidated (S-palmitoyl cysteine). Positions 379 to 411 are disordered; it reads DSDNMSRRHTSYSNNRSPTNSTGTWKDSPKSSR. Residues 389–403 are compositionally biased toward polar residues; that stretch reads SYSNNRSPTNSTGTW. Serine 406 is modified (phosphoserine).

Belongs to the G-protein coupled receptor 1 family. Vasopressin/oxytocin receptor subfamily.

Its subcellular location is the cell membrane. Its function is as follows. Receptor for arginine vasopressin. The activity of this receptor is mediated by G proteins which activate a phosphatidyl-inositol-calcium second messenger system. Involved in social memory formation. In Microtus ochrogaster (Prairie vole), this protein is Vasopressin V1a receptor (Avpr1a).